A 187-amino-acid chain; its full sequence is UPF0340 protein SPT_0687 (187 aa).

It belongs to the UPF0340 family.

In Streptococcus pneumoniae (strain Taiwan19F-14), this protein is UPF0340 protein SPT_0687.